A 431-amino-acid chain; its full sequence is tRNA(Ile)-lysidine synthase (431 aa).

25-30 (SGGLDS) serves as a coordination point for ATP.

The protein belongs to the tRNA(Ile)-lysidine synthase family.

The protein localises to the cytoplasm. The enzyme catalyses cytidine(34) in tRNA(Ile2) + L-lysine + ATP = lysidine(34) in tRNA(Ile2) + AMP + diphosphate + H(+). Ligates lysine onto the cytidine present at position 34 of the AUA codon-specific tRNA(Ile) that contains the anticodon CAU, in an ATP-dependent manner. Cytidine is converted to lysidine, thus changing the amino acid specificity of the tRNA from methionine to isoleucine. In Legionella pneumophila (strain Lens), this protein is tRNA(Ile)-lysidine synthase.